Here is a 42-residue protein sequence, read N- to C-terminus: Photosystem I reaction center subunit IX (42 aa).

The helical transmembrane segment at 7–27 (YLSVAPVLSTLWFGALAGLLI) threads the bilayer.

It belongs to the PsaJ family.

It localises to the plastid. The protein localises to the chloroplast thylakoid membrane. May help in the organization of the PsaE and PsaF subunits. This is Photosystem I reaction center subunit IX from Agrostis stolonifera (Creeping bentgrass).